A 294-amino-acid polypeptide reads, in one-letter code: Cytidine deaminase (294 aa).

2 consecutive CMP/dCMP-type deaminase domains span residues 48–168 (DDDA…FGPK) and 187–294 (ALTD…RITF). Residue 89 to 91 (NME) participates in substrate binding. Zn(2+) is bound at residue H102. The active-site Proton donor is the E104. Zn(2+) is bound by residues C129 and C132.

The protein belongs to the cytidine and deoxycytidylate deaminase family. Homodimer. It depends on Zn(2+) as a cofactor.

The enzyme catalyses cytidine + H2O + H(+) = uridine + NH4(+). The catalysed reaction is 2'-deoxycytidine + H2O + H(+) = 2'-deoxyuridine + NH4(+). In terms of biological role, this enzyme scavenges exogenous and endogenous cytidine and 2'-deoxycytidine for UMP synthesis. This chain is Cytidine deaminase, found in Serratia proteamaculans (strain 568).